A 361-amino-acid chain; its full sequence is 3-dehydroquinate synthase (361 aa).

NAD(+) is bound by residues 60 to 65 (DAEAAK), 94 to 98 (GATTD), 118 to 119 (TT), Lys131, and Lys140. Zn(2+) is bound by residues Glu173, His242, and His258.

It belongs to the sugar phosphate cyclases superfamily. Dehydroquinate synthase family. Co(2+) is required as a cofactor. The cofactor is Zn(2+). It depends on NAD(+) as a cofactor.

It localises to the cytoplasm. It catalyses the reaction 7-phospho-2-dehydro-3-deoxy-D-arabino-heptonate = 3-dehydroquinate + phosphate. The protein operates within metabolic intermediate biosynthesis; chorismate biosynthesis; chorismate from D-erythrose 4-phosphate and phosphoenolpyruvate: step 2/7. Its function is as follows. Catalyzes the conversion of 3-deoxy-D-arabino-heptulosonate 7-phosphate (DAHP) to dehydroquinate (DHQ). The chain is 3-dehydroquinate synthase from Cutibacterium acnes (strain DSM 16379 / KPA171202) (Propionibacterium acnes).